We begin with the raw amino-acid sequence, 500 residues long: MENLKYVLEMENISKEFPGVKALDDVQLKLKPGTVHALMGENGAGKSTLMKCLFGIYEKNSGKILLDGVEVNFKSTKEALENGVSMVHQELNQVLQRNVLDNIWLGRYPMKGFFVDEKKMYNDTINIFKDLDIKVDPRKKVADLPIAERQMIEIAKAVSYKSKVIVMDEPTSSLTEKEVDHLFRIIKKLKESGVGIIYISHKMEEIKMISDEITILRDGKWISTNDVSKISTEQIISMMVGRDLTERFPKKDNKAKEMILEVKNLTALNQPSIQDVSFELYKGEILGIAGLVGSKRTEIVETIFGMRPKKHGEIILNGKTVKNKSPEDAIKNGFALVTEERRSTGIFSMLDVAFNSVISNLDRYKNKFRLLKNKDIEKDTKWIVDSMRVKTPSYSTKIGSLSGGNQQKVIIGRWLLTEPEVLMLDEPTRGIDVLAKYEIYQLMIDLAKKDKGIIMISSEMPELLGVTDRILVMSNGRVAGIVKTSETNQEEIMELSAKYL.

2 ABC transporter domains span residues 8–243 (LEME…VGRD) and 257–500 (EMIL…AKYL). Position 40-47 (40-47 (GENGAGKS)) interacts with ATP.

This sequence belongs to the ABC transporter superfamily. Galactose/methyl galactoside importer (TC 3.A.1.2.3) family. In terms of assembly, the complex is composed of one ATP-binding protein (MglA), two transmembrane proteins (MglC) and a solute-binding protein (MglB).

The protein resides in the cell inner membrane. The catalysed reaction is D-galactose(out) + ATP + H2O = D-galactose(in) + ADP + phosphate + H(+). It catalyses the reaction methyl beta-D-galactoside(out) + ATP + H2O = methyl beta-D-galactoside(in) + ADP + phosphate + H(+). Its function is as follows. Part of the ABC transporter complex MglABC involved in galactose/methyl galactoside import. Responsible for energy coupling to the transport system. This Fusobacterium nucleatum subsp. nucleatum (strain ATCC 25586 / DSM 15643 / BCRC 10681 / CIP 101130 / JCM 8532 / KCTC 2640 / LMG 13131 / VPI 4355) protein is Galactose/methyl galactoside import ATP-binding protein MglA.